A 161-amino-acid chain; its full sequence is Phosphopantetheine adenylyltransferase (161 aa).

T9 is a substrate binding site. ATP-binding positions include T9–F10 and H17. Positions 41, 73, and 87 each coordinate substrate. ATP contacts are provided by residues G88–R90, E98, and Y123–T129.

It belongs to the bacterial CoaD family. As to quaternary structure, homohexamer. Requires Mg(2+) as cofactor.

Its subcellular location is the cytoplasm. The catalysed reaction is (R)-4'-phosphopantetheine + ATP + H(+) = 3'-dephospho-CoA + diphosphate. The protein operates within cofactor biosynthesis; coenzyme A biosynthesis; CoA from (R)-pantothenate: step 4/5. Its function is as follows. Reversibly transfers an adenylyl group from ATP to 4'-phosphopantetheine, yielding dephospho-CoA (dPCoA) and pyrophosphate. This is Phosphopantetheine adenylyltransferase from Cupriavidus metallidurans (strain ATCC 43123 / DSM 2839 / NBRC 102507 / CH34) (Ralstonia metallidurans).